The following is a 310-amino-acid chain: Aspartate carbamoyltransferase catalytic subunit (310 aa).

Carbamoyl phosphate-binding residues include Arg58 and Thr59. Lys86 is a binding site for L-aspartate. Carbamoyl phosphate contacts are provided by Arg108, His136, and Gln139. Residues Arg169 and Arg224 each coordinate L-aspartate. 2 residues coordinate carbamoyl phosphate: Gly265 and Pro266.

This sequence belongs to the aspartate/ornithine carbamoyltransferase superfamily. ATCase family. As to quaternary structure, heterododecamer (2C3:3R2) of six catalytic PyrB chains organized as two trimers (C3), and six regulatory PyrI chains organized as three dimers (R2).

It catalyses the reaction carbamoyl phosphate + L-aspartate = N-carbamoyl-L-aspartate + phosphate + H(+). The protein operates within pyrimidine metabolism; UMP biosynthesis via de novo pathway; (S)-dihydroorotate from bicarbonate: step 2/3. In terms of biological role, catalyzes the condensation of carbamoyl phosphate and aspartate to form carbamoyl aspartate and inorganic phosphate, the committed step in the de novo pyrimidine nucleotide biosynthesis pathway. The chain is Aspartate carbamoyltransferase catalytic subunit from Citrifermentans bemidjiense (strain ATCC BAA-1014 / DSM 16622 / JCM 12645 / Bem) (Geobacter bemidjiensis).